Reading from the N-terminus, the 358-residue chain is Probable (S)-tetrahydroprotoberberine N-methyltransferase 2 (358 aa).

Residues S98, G136, N160, Q164, D186, V187, and I202 each contribute to the S-adenosyl-L-methionine site. C333 is a catalytic residue.

It belongs to the CFA/CMAS family. As to quaternary structure, homodimer.

Its subcellular location is the cytoplasm. The catalysed reaction is (S)-stylopine + S-adenosyl-L-methionine = (S)-cis-N-methylstylopine + S-adenosyl-L-homocysteine. It carries out the reaction (S)-tetrahydropalmatine + S-adenosyl-L-methionine = (S)-cis-N-methyltetrahydropalmatine + S-adenosyl-L-homocysteine. Its pathway is alkaloid biosynthesis. In terms of biological role, N-methyltransferase with a strict substrate specificity for (R,S)-tetrahydropalmatine or (R,S)-stylopine. This chain is Probable (S)-tetrahydroprotoberberine N-methyltransferase 2, found in Papaver bracteatum (Great scarlet poppy).